The chain runs to 342 residues: Glucokinase (342 aa).

An ATP-binding site is contributed by 18–23 (GDIGGT).

Belongs to the bacterial glucokinase family.

The protein localises to the cytoplasm. The catalysed reaction is D-glucose + ATP = D-glucose 6-phosphate + ADP + H(+). In Chelativorans sp. (strain BNC1), this protein is Glucokinase.